Here is a 125-residue protein sequence, read N- to C-terminus: Cytochrome c oxidase assembly factor 6 homolog (125 aa).

Gly2 is modified (N-acetylalanine). Positions 55 to 98 (RQVCWGARDEYWKCLDENLEDASQCKKLRSSFESSCPQQWIKYF) constitute a CHCH domain. The Cx9C motif signature appears at 58-68 (CWGARDEYWKC). Intrachain disulfides connect Cys58–Cys90 and Cys68–Cys79. The Cx10C motif signature appears at 79–90 (CKKLRSSFESSC).

This sequence belongs to the cytochrome c oxidase subunit 6B family. As to quaternary structure, interacts with COA1. Found in a complex with TMEM177, COX20, MT-CO2/COX2, COX18, SCO1 and SCO2. Interacts with MT-CO2/COX2 and SCO2. Interacts with SCO1. Interacts with COX20 in a MT-CO2/COX2- and COX18-dependent manner. Interacts with COX16.

Its subcellular location is the mitochondrion intermembrane space. Its function is as follows. Involved in the maturation of the mitochondrial respiratory chain complex IV subunit MT-CO2/COX2. Thereby, may regulate early steps of complex IV assembly. Mitochondrial respiratory chain complex IV or cytochrome c oxidase is the component of the respiratory chain that catalyzes the transfer of electrons from intermembrane space cytochrome c to molecular oxygen in the matrix and as a consequence contributes to the proton gradient involved in mitochondrial ATP synthesis. May also be required for efficient formation of respiratory supercomplexes comprised of complexes III and IV. This Homo sapiens (Human) protein is Cytochrome c oxidase assembly factor 6 homolog (COA6).